The following is a 1342-amino-acid chain: DNA-directed RNA polymerase subunit beta (1342 aa).

It belongs to the RNA polymerase beta chain family. The RNAP catalytic core consists of 2 alpha, 1 beta, 1 beta' and 1 omega subunit. When a sigma factor is associated with the core the holoenzyme is formed, which can initiate transcription.

It carries out the reaction RNA(n) + a ribonucleoside 5'-triphosphate = RNA(n+1) + diphosphate. In terms of biological role, DNA-dependent RNA polymerase catalyzes the transcription of DNA into RNA using the four ribonucleoside triphosphates as substrates. The protein is DNA-directed RNA polymerase subunit beta of Buchnera aphidicola subsp. Acyrthosiphon pisum (strain 5A).